Consider the following 406-residue polypeptide: uncharacterized protein (406 aa).

Residues 1 to 36 (MDRVRSLIGNRRGRRHNRQHPPYPHSGSPSTVNLLG) form a disordered region.

It to yeast YMR316w.

This is an uncharacterized protein from Saccharomyces cerevisiae (strain ATCC 204508 / S288c) (Baker's yeast).